The sequence spans 418 residues: GTPase Obg (418 aa).

An Obg domain is found at Met1–Leu156. Positions Ala157–Lys324 constitute an OBG-type G domain. Residues Gly163 to Ser170, Phe188 to Val192, Asp209 to Gly212, Asn278 to Asp281, and Ser305 to Leu307 contribute to the GTP site. Mg(2+)-binding residues include Ser170 and Thr190. One can recognise an OCT domain in the interval Val339–Asn417.

The protein belongs to the TRAFAC class OBG-HflX-like GTPase superfamily. OBG GTPase family. In terms of assembly, monomer. It depends on Mg(2+) as a cofactor.

The protein resides in the cytoplasm. Its function is as follows. An essential GTPase which binds GTP, GDP and possibly (p)ppGpp with moderate affinity, with high nucleotide exchange rates and a fairly low GTP hydrolysis rate. Plays a role in control of the cell cycle, stress response, ribosome biogenesis and in those bacteria that undergo differentiation, in morphogenesis control. The protein is GTPase Obg of Mycoplasmopsis pulmonis (strain UAB CTIP) (Mycoplasma pulmonis).